We begin with the raw amino-acid sequence, 228 residues long: Cytidylate kinase (228 aa).

17-25 is an ATP binding site; sequence GPTASGKGT.

This sequence belongs to the cytidylate kinase family. Type 1 subfamily.

Its subcellular location is the cytoplasm. The catalysed reaction is CMP + ATP = CDP + ADP. It catalyses the reaction dCMP + ATP = dCDP + ADP. The chain is Cytidylate kinase from Paraburkholderia phymatum (strain DSM 17167 / CIP 108236 / LMG 21445 / STM815) (Burkholderia phymatum).